The chain runs to 213 residues: Glycerol-3-phosphate acyltransferase (213 aa).

The next 6 membrane-spanning stretches (helical) occupy residues 4 to 24 (IILL…LWIG), 48 to 68 (ILGV…GTLA), 71 to 91 (LPLF…LAVI), 113 to 133 (VILG…IIVL), 144 to 164 (VIGA…GFIL), and 165 to 185 (TSYD…IILR).

This sequence belongs to the PlsY family. As to quaternary structure, probably interacts with PlsX.

The protein localises to the cell membrane. It catalyses the reaction an acyl phosphate + sn-glycerol 3-phosphate = a 1-acyl-sn-glycero-3-phosphate + phosphate. It participates in lipid metabolism; phospholipid metabolism. Its function is as follows. Catalyzes the transfer of an acyl group from acyl-phosphate (acyl-PO(4)) to glycerol-3-phosphate (G3P) to form lysophosphatidic acid (LPA). This enzyme utilizes acyl-phosphate as fatty acyl donor, but not acyl-CoA or acyl-ACP. This is Glycerol-3-phosphate acyltransferase from Lactococcus lactis subsp. lactis (strain IL1403) (Streptococcus lactis).